A 262-amino-acid polypeptide reads, in one-letter code: MQFLALALTILLAAATQAVPMQADAPSQLEHVKVAMMEYMAQVKETAQRSIDHLDDTEYKEYKVQLSQSLDNLQQYAQTASESLAPYSEAIGVQLTEATAAVRAEVMKDVEELRSQLEPKRAELKEVLDKHIDEYRKRLEPLIKDIVEQRRTELEAFRVKIEPVVEEMRAKVSANVEETKAKLMPIVETVRAKLTERLEELRTLASPYAEEYKEQMVKAVGEVREKVVPLTTDFKGQLGPAAEQAKEKLMALYETISQAMKA.

The signal sequence occupies residues 1-18 (MQFLALALTILLAAATQA). The interval 32–63 (VKVAMMEYMAQVKETAQRSIDHLDDTEYKEYK) is 3 X approximate tandem repeats. 2 consecutive repeat copies span residues 64 to 85 (VQLS…ESLA) and 87 to 107 (YSEA…AEVM). The 10 X approximate tandem repeats stretch occupies residues 64 to 262 (VQLSQSLDNL…YETISQAMKA (199 aa)). A 3; half-length repeat occupies 108-118 (KDVEELRSQLE). 5 tandem repeats follow at residues 119–140 (PKRA…KRLE), 141–162 (PLIK…VKIE), 163–184 (PVVE…AKLM), 185–206 (PIVE…TLAS), and 207–228 (PYAE…EKVV). The 9; half-length repeat unit spans residues 229 to 239 (PLTTDFKGQLG). Repeat unit 10 spans residues 240–262 (PAAEQAKEKLMALYETISQAMKA).

This sequence belongs to the apolipoprotein A1/A4/E family.

Its subcellular location is the secreted. Participates in the reverse transport of cholesterol from tissues to the liver for excretion by promoting cholesterol efflux from tissues and by acting as a cofactor for the lecithin cholesterol acyltransferase (LCAT). The protein is Apolipoprotein A-I-2 of Oncorhynchus mykiss (Rainbow trout).